The following is a 133-amino-acid chain: Large ribosomal subunit protein bL20 (133 aa).

It belongs to the bacterial ribosomal protein bL20 family.

In terms of biological role, binds directly to 23S ribosomal RNA and is necessary for the in vitro assembly process of the 50S ribosomal subunit. It is not involved in the protein synthesizing functions of that subunit. This is Large ribosomal subunit protein bL20 from Chelativorans sp. (strain BNC1).